A 407-amino-acid chain; its full sequence is Protein ORF45 (407 aa).

The segment covering 1-10 (MAMFVRTSSS) has biased composition (polar residues). Disordered stretches follow at residues 1–183 (MAMF…SDDE), 196–318 (GTGA…QRQP), and 332–407 (SSGS…PWLD). S41 bears the Phosphoserine; by host TBK1 and IKKE mark. Over residues 91–115 (SEYDEDEEDEDEEENDDVQEEDEPE) the composition is skewed to acidic residues. Residues 128–139 (LRPRPLARRAHT) show a composition bias toward basic residues. Residue S162 is modified to Phosphoserine; by host TBK1 and IKKE. Residues 205-218 (ASRNSVPGTQSSPY) show a composition bias toward polar residues. The Nuclear export signal signature appears at 284 to 294 (VLSQRIGLMDV). The Nuclear localization signal signature appears at 297–300 (KRKR). Low complexity-rich tracts occupy residues 342–353 (SSAVSVIVSPSS) and 360–383 (TQSP…SRCS).

In terms of assembly, interacts with host IRF7. Interacts with host RPS6KA1. Interacts with host RAB11FIP5; this interaction results in the lysosomal degradation of ORF45 and the inhibition of viral particle release. Interacts with host p53/TP53; this interaction down-regulates p53/TP53 signaling pathway. Interacts with the N-terminal part of host NLRP1; relieving autoinhibition of the NLRP1 inflammasome. Post-translationally, phosphorylated on Ser-41 and Ser-162 by host IKBKE and TBK1.

Its subcellular location is the virion tegument. It is found in the host cytoplasm. The protein resides in the host nucleus. The protein localises to the host Golgi apparatus. In terms of biological role, prevents the establishment of cellular antiviral state by blocking virus-induced phosphorylation and activation of host interferon regulatory factor 7/IRF7, a transcription factor critical for the induction of interferons alpha and beta. Mechanistically, ORF45 competes with the associated IRF7 and inhibits its phosphorylation by IKBKE or TBK1 by acting as an alternative substrate. Acts as an activator of the NLRP1 inflammasome via interaction with the N-terminal part of host NLRP1: interaction promotes translocation of the N-terminal part of NLRP1 into the nucleus, relieving autoinhibition of the NLRP1 inflammasome and leading to its activation. Also plays a role in promoting the late transcription and translation of viral lytic genes by constitutively activating host extracellular signal-regulated kinase (ERK)-p90 ribosomal S6 kinase/RPS6KA1. In addition, supports the viral replication cycle by modulating host p53/TP53 signaling pathway. Interacts with host p53/TP53 and prevents its interaction with the deubiquitinase USP7, leading to sequestration of P53/TP53 in the host cytoplasm thereby diminishing its transcriptional activity. The protein is Protein ORF45 (ORF45) of Homo sapiens (Human).